Consider the following 129-residue polypeptide: Small ribosomal subunit protein uS9 (129 aa).

The interval 97–129 (LKAQGFLTRDPRKKERKKYGRKKARKSFQFSKR) is disordered. Positions 110–129 (KERKKYGRKKARKSFQFSKR) are enriched in basic residues.

Belongs to the universal ribosomal protein uS9 family.

This is Small ribosomal subunit protein uS9 from Chlamydia trachomatis serovar A (strain ATCC VR-571B / DSM 19440 / HAR-13).